A 72-amino-acid polypeptide reads, in one-letter code: MAKEGAIEVEGRVVEPLPNAMFRVELDNGHKVLAHISGKMRQHYIRILPEDRVVVELSPYDLTRGRIVYRYK.

An S1-like domain is found at 1 to 72 (MAKEGAIEVE…TRGRIVYRYK (72 aa)).

It belongs to the IF-1 family. Component of the 30S ribosomal translation pre-initiation complex which assembles on the 30S ribosome in the order IF-2 and IF-3, IF-1 and N-formylmethionyl-tRNA(fMet); mRNA recruitment can occur at any time during PIC assembly.

It is found in the cytoplasm. Its function is as follows. One of the essential components for the initiation of protein synthesis. Stabilizes the binding of IF-2 and IF-3 on the 30S subunit to which N-formylmethionyl-tRNA(fMet) subsequently binds. Helps modulate mRNA selection, yielding the 30S pre-initiation complex (PIC). Upon addition of the 50S ribosomal subunit IF-1, IF-2 and IF-3 are released leaving the mature 70S translation initiation complex. The polypeptide is Translation initiation factor IF-1 (Corynebacterium efficiens (strain DSM 44549 / YS-314 / AJ 12310 / JCM 11189 / NBRC 100395)).